The following is a 603-amino-acid chain: Phosphoribosylformylglycinamidine synthase subunit PurL (603 aa).

Histidine 32 is an active-site residue. Tyrosine 35 and lysine 68 together coordinate ATP. Glutamate 70 lines the Mg(2+) pocket. Residues 71-74 (SHNH) and arginine 93 contribute to the substrate site. Histidine 72 serves as the catalytic Proton acceptor. Residue aspartate 94 coordinates Mg(2+). Residues aspartate 107 and 136–139 (GELR) contribute to the ATP site. Substrate-binding residues include glycine 189 and glutamine 208. Aspartate 236 contacts Mg(2+). Residue 280-282 (ESQ) coordinates substrate. Glycine 388, lysine 429, asparagine 442, and glycine 477 together coordinate ATP. A Mg(2+)-binding site is contributed by asparagine 478. Serine 480 provides a ligand contact to substrate. The ATP site is built by serine 549 and histidine 556.

It belongs to the FGAMS family. Monomer. Part of the FGAM synthase complex composed of 1 PurL, 1 PurQ and 2 PurS subunits.

The protein resides in the cytoplasm. It carries out the reaction N(2)-formyl-N(1)-(5-phospho-beta-D-ribosyl)glycinamide + L-glutamine + ATP + H2O = 2-formamido-N(1)-(5-O-phospho-beta-D-ribosyl)acetamidine + L-glutamate + ADP + phosphate + H(+). Its pathway is purine metabolism; IMP biosynthesis via de novo pathway; 5-amino-1-(5-phospho-D-ribosyl)imidazole from N(2)-formyl-N(1)-(5-phospho-D-ribosyl)glycinamide: step 1/2. In terms of biological role, part of the phosphoribosylformylglycinamidine synthase complex involved in the purines biosynthetic pathway. Catalyzes the ATP-dependent conversion of formylglycinamide ribonucleotide (FGAR) and glutamine to yield formylglycinamidine ribonucleotide (FGAM) and glutamate. The FGAM synthase complex is composed of three subunits. PurQ produces an ammonia molecule by converting glutamine to glutamate. PurL transfers the ammonia molecule to FGAR to form FGAM in an ATP-dependent manner. PurS interacts with PurQ and PurL and is thought to assist in the transfer of the ammonia molecule from PurQ to PurL. This Thermotoga maritima (strain ATCC 43589 / DSM 3109 / JCM 10099 / NBRC 100826 / MSB8) protein is Phosphoribosylformylglycinamidine synthase subunit PurL.